The primary structure comprises 161 residues: Nucleoside diphosphate kinase (161 aa).

Positions 12, 60, 88, 94, and 105 each coordinate ATP. The Pros-phosphohistidine intermediate role is filled by H121.

It belongs to the NDK family. It depends on Mg(2+) as a cofactor.

It is found in the cytoplasm. The catalysed reaction is a 2'-deoxyribonucleoside 5'-diphosphate + ATP = a 2'-deoxyribonucleoside 5'-triphosphate + ADP. It carries out the reaction a ribonucleoside 5'-diphosphate + ATP = a ribonucleoside 5'-triphosphate + ADP. Its function is as follows. Major role in the synthesis of nucleoside triphosphates other than ATP. The ATP gamma phosphate is transferred to the NDP beta phosphate via a ping-pong mechanism, using a phosphorylated active-site intermediate. The sequence is that of Nucleoside diphosphate kinase from Pyrococcus furiosus (strain ATCC 43587 / DSM 3638 / JCM 8422 / Vc1).